The sequence spans 236 residues: Syntaxin-8 (236 aa).

Over 1–215 (MAPDPWFSTY…LVDRKSTSCG (215 aa)) the chain is Cytoplasmic. Residues 42–65 (VTIRALLQKLKEKIALLKDLLLRA) adopt a coiled-coil conformation. The t-SNARE coiled-coil homology domain maps to 145 to 207 (QKIIQEQDAG…RTETRRVNLV (63 aa)). Ser-160 is subject to Phosphoserine. Residues 216-232 (MIMVILLLLVAIVVVAV) form a helical; Anchor for type IV membrane protein membrane-spanning segment. Residues 233 to 236 (WPTK) lie on the Vesicular side of the membrane.

Belongs to the syntaxin family. Forms a SNARE complex with STX7, VTI1B and VAMP8 which functions in the homotypic fusion of late endosomes. Part of the SNARE core complex containing STX7, VAMP8 and VTI1B. Interacts with VAMP8. Interacts with HECTD3. Interacts with TPC1. Post-translationally, ubiquitinated by HECTD3.

It localises to the membrane. Functionally, vesicle trafficking protein that functions in the early secretory pathway, possibly by mediating retrograde transport from cis-Golgi membranes to the ER. This is Syntaxin-8 (STX8) from Bos taurus (Bovine).